The following is a 287-amino-acid chain: Protein TMEPAI (287 aa).

Residues 1–40 (MHRLMGVNSTAAAAAGQPNVSCTCNCKRSLFQSMEITELE) are Lumenal-facing. The helical transmembrane segment at 41-63 (FVQIIIIVVVMMVMVVVITCLLS) threads the bilayer. Topologically, residues 64–287 (HYKLSARSFI…EKDKQKGHPL (224 aa)) are cytoplasmic. The short motif at 158–161 (PPPY) is the PPxY motif 1 element. Residues 186-189 (PPNR) carry the SMAD interaction motif (SIM) motif. Residues 229–232 (PPTY) carry the PPxY motif 2 motif. The tract at residues 239–258 (YPGSSFQHQQSSGPPSLLEG) is disordered. Residues 242 to 252 (SSFQHQQSSGP) are compositionally biased toward polar residues.

The protein belongs to the PMEPA1 family. As to quaternary structure, interacts with NEDD4 (via PPxY motifs). Interacts with AR. Interacts with LDLRAD4. Interacts (via the SMAD interaction motif) with SMAD2 and SMAD3. Highest expression in prostate. Also expressed in ovary.

Its subcellular location is the early endosome membrane. The protein resides in the golgi apparatus membrane. In terms of biological role, functions as a negative regulator of TGF-beta signaling and thereby probably plays a role in cell proliferation, differentiation, apoptosis, motility, extracellular matrix production and immunosuppression. In the canonical TGF-beta pathway, ZFYVE9/SARA recruits the intracellular signal transducer and transcriptional modulators SMAD2 and SMAD3 to the TGF-beta receptor. Phosphorylated by the receptor, SMAD2 and SMAD3 then form a heteromeric complex with SMAD4 that translocates to the nucleus to regulate transcription. Through interaction with SMAD2 and SMAD3, LDLRAD4 may compete with ZFYVE9 and SMAD4 and prevent propagation of the intracellular signal. Also involved in down-regulation of the androgen receptor (AR), enhancing ubiquitination and proteasome-mediated degradation of AR, probably by recruiting NEDD4. The sequence is that of Protein TMEPAI (PMEPA1) from Homo sapiens (Human).